The primary structure comprises 240 residues: Pyridoxine 5'-phosphate synthase (240 aa).

N7 is a 3-amino-2-oxopropyl phosphate binding site. 9-10 serves as a coordination point for 1-deoxy-D-xylulose 5-phosphate; it reads DH. R18 provides a ligand contact to 3-amino-2-oxopropyl phosphate. H43 functions as the Proton acceptor in the catalytic mechanism. Positions 45 and 50 each coordinate 1-deoxy-D-xylulose 5-phosphate. E70 (proton acceptor) is an active-site residue. T100 serves as a coordination point for 1-deoxy-D-xylulose 5-phosphate. H191 serves as the catalytic Proton donor. 3-amino-2-oxopropyl phosphate-binding positions include G192 and 213–214; that span reads GH.

Belongs to the PNP synthase family. As to quaternary structure, homooctamer; tetramer of dimers.

It localises to the cytoplasm. The enzyme catalyses 3-amino-2-oxopropyl phosphate + 1-deoxy-D-xylulose 5-phosphate = pyridoxine 5'-phosphate + phosphate + 2 H2O + H(+). It participates in cofactor biosynthesis; pyridoxine 5'-phosphate biosynthesis; pyridoxine 5'-phosphate from D-erythrose 4-phosphate: step 5/5. Functionally, catalyzes the complicated ring closure reaction between the two acyclic compounds 1-deoxy-D-xylulose-5-phosphate (DXP) and 3-amino-2-oxopropyl phosphate (1-amino-acetone-3-phosphate or AAP) to form pyridoxine 5'-phosphate (PNP) and inorganic phosphate. The chain is Pyridoxine 5'-phosphate synthase from Trichodesmium erythraeum (strain IMS101).